We begin with the raw amino-acid sequence, 287 residues long: Bifunctional protein FolD (287 aa).

Residues 165-167 (GRS), Ser190, and Ile231 each bind NADP(+).

This sequence belongs to the tetrahydrofolate dehydrogenase/cyclohydrolase family. Homodimer.

The catalysed reaction is (6R)-5,10-methylene-5,6,7,8-tetrahydrofolate + NADP(+) = (6R)-5,10-methenyltetrahydrofolate + NADPH. It catalyses the reaction (6R)-5,10-methenyltetrahydrofolate + H2O = (6R)-10-formyltetrahydrofolate + H(+). Its pathway is one-carbon metabolism; tetrahydrofolate interconversion. Its function is as follows. Catalyzes the oxidation of 5,10-methylenetetrahydrofolate to 5,10-methenyltetrahydrofolate and then the hydrolysis of 5,10-methenyltetrahydrofolate to 10-formyltetrahydrofolate. The chain is Bifunctional protein FolD from Carboxydothermus hydrogenoformans (strain ATCC BAA-161 / DSM 6008 / Z-2901).